We begin with the raw amino-acid sequence, 552 residues long: Formate--tetrahydrofolate ligase (552 aa).

ATP is bound at residue 65–72 (TPAGEGKT).

Belongs to the formate--tetrahydrofolate ligase family.

The catalysed reaction is (6S)-5,6,7,8-tetrahydrofolate + formate + ATP = (6R)-10-formyltetrahydrofolate + ADP + phosphate. The protein operates within one-carbon metabolism; tetrahydrofolate interconversion. The chain is Formate--tetrahydrofolate ligase from Fervidobacterium nodosum (strain ATCC 35602 / DSM 5306 / Rt17-B1).